Here is a 377-residue protein sequence, read N- to C-terminus: Prolargin (377 aa).

The first 21 residues, 1-21 (MRASFFWFLPLLLILASVAQG), serve as a signal peptide directing secretion. Residues 22 to 61 (QPRPKPGIRRKPKPRPTPSFPQPHEPAEPTDLPPPLPPGP) are disordered. Composition is skewed to pro residues over residues 36-45 (RPTPSFPQPH) and 52-61 (DLPPPLPPGP). LRR repeat units lie at residues 90–109 (RKVP…NNFI), 110–133 (TELP…NNRI), 134–157 (RKVD…KNQL), 158–178 (EEVP…QNLI), 179–202 (SRIP…HNRL), 203–228 (SDGV…HNIL), 229–249 (RRMP…SNKI), 250–273 (ETIP…YNKL), 274–298 (SDRG…HNKI), 299–318 (SNVP…NNSI), 319–357 (EKIN…GNFL), and 358–377 (KPPI…SVVI). N-linked (GlcNAc...) asparagine glycosylation occurs at Asn119. N-linked (GlcNAc...) asparagine glycans are attached at residues Asn284, Asn315, and Asn322. Cys327 and Cys368 form a disulfide bridge.

This sequence belongs to the small leucine-rich proteoglycan (SLRP) family. SLRP class II subfamily. In terms of assembly, binds the basement membrane heparan sulfate proteoglycan perlecan and triple helical collagens type I and type II. Post-translationally, glycosylated; contains heparan sulfate.

It localises to the secreted. Its subcellular location is the extracellular space. The protein resides in the extracellular matrix. In terms of biological role, may anchor basement membranes to the underlying connective tissue. This is Prolargin (Prelp) from Rattus norvegicus (Rat).